The following is a 215-amino-acid chain: Pyridoxine/pyridoxamine 5'-phosphate oxidase (215 aa).

Substrate contacts are provided by residues 9–12 (RRDY) and lysine 69. FMN-binding positions include 64 to 69 (RILLLK), 79 to 80 (FT), lysine 86, and glutamine 108. 3 residues coordinate substrate: tyrosine 126, arginine 130, and serine 134. Residues 143–144 (QS) and tryptophan 188 each bind FMN. A substrate-binding site is contributed by 194 to 196 (RLH). Arginine 198 contacts FMN.

Belongs to the pyridoxamine 5'-phosphate oxidase family. In terms of assembly, homodimer. FMN serves as cofactor.

The catalysed reaction is pyridoxamine 5'-phosphate + O2 + H2O = pyridoxal 5'-phosphate + H2O2 + NH4(+). The enzyme catalyses pyridoxine 5'-phosphate + O2 = pyridoxal 5'-phosphate + H2O2. Its pathway is cofactor metabolism; pyridoxal 5'-phosphate salvage; pyridoxal 5'-phosphate from pyridoxamine 5'-phosphate: step 1/1. The protein operates within cofactor metabolism; pyridoxal 5'-phosphate salvage; pyridoxal 5'-phosphate from pyridoxine 5'-phosphate: step 1/1. In terms of biological role, catalyzes the oxidation of either pyridoxine 5'-phosphate (PNP) or pyridoxamine 5'-phosphate (PMP) into pyridoxal 5'-phosphate (PLP). This is Pyridoxine/pyridoxamine 5'-phosphate oxidase from Pseudomonas fluorescens (strain ATCC BAA-477 / NRRL B-23932 / Pf-5).